Reading from the N-terminus, the 444-residue chain is Tubulin beta chain (444 aa).

Residues Q11, E69, S138, G142, T143, G144, N204, and N226 each contribute to the GTP site. Mg(2+) is bound at residue E69. A disordered region spans residues 423-444; the sequence is QQYQDATAEEEGEFDDEEEMDV. Over residues 429-444 the composition is skewed to acidic residues; that stretch reads TAEEEGEFDDEEEMDV.

The protein belongs to the tubulin family. In terms of assembly, dimer of alpha and beta chains. A typical microtubule is a hollow water-filled tube with an outer diameter of 25 nm and an inner diameter of 15 nM. Alpha-beta heterodimers associate head-to-tail to form protofilaments running lengthwise along the microtubule wall with the beta-tubulin subunit facing the microtubule plus end conferring a structural polarity. Microtubules usually have 13 protofilaments but different protofilament numbers can be found in some organisms and specialized cells. Mg(2+) is required as a cofactor.

It localises to the cytoplasm. It is found in the cytoskeleton. Functionally, tubulin is the major constituent of microtubules, a cylinder consisting of laterally associated linear protofilaments composed of alpha- and beta-tubulin heterodimers. Microtubules grow by the addition of GTP-tubulin dimers to the microtubule end, where a stabilizing cap forms. Below the cap, tubulin dimers are in GDP-bound state, owing to GTPase activity of alpha-tubulin. This Euplotes focardii protein is Tubulin beta chain.